The following is a 152-amino-acid chain: Small ribosomal subunit protein bS6 (152 aa).

The interval 96 to 152 is disordered; the sequence is HEEGPSAMLQKRDRDDRGPREGGDRGPRREFGDRPPRRDGDFQRGPRPDRAPREDRA.

This sequence belongs to the bacterial ribosomal protein bS6 family.

Functionally, binds together with bS18 to 16S ribosomal RNA. This Rhizobium etli (strain ATCC 51251 / DSM 11541 / JCM 21823 / NBRC 15573 / CFN 42) protein is Small ribosomal subunit protein bS6.